The chain runs to 233 residues: Purine nucleoside phosphorylase DeoD-type (233 aa).

Residue H4 participates in a purine D-ribonucleoside binding. Phosphate is bound by residues G20, R24, R43, and 87–90; that span reads RIGT. Residues 179–181 and 203–204 contribute to the a purine D-ribonucleoside site; these read EME and SD. Residue D204 is the Proton donor of the active site.

Belongs to the PNP/UDP phosphorylase family. In terms of assembly, homohexamer; trimer of homodimers.

The catalysed reaction is a purine D-ribonucleoside + phosphate = a purine nucleobase + alpha-D-ribose 1-phosphate. The enzyme catalyses a purine 2'-deoxy-D-ribonucleoside + phosphate = a purine nucleobase + 2-deoxy-alpha-D-ribose 1-phosphate. In terms of biological role, catalyzes the reversible phosphorolytic breakdown of the N-glycosidic bond in the beta-(deoxy)ribonucleoside molecules, with the formation of the corresponding free purine bases and pentose-1-phosphate. This is Purine nucleoside phosphorylase DeoD-type from Helicobacter pylori (strain J99 / ATCC 700824) (Campylobacter pylori J99).